A 575-amino-acid polypeptide reads, in one-letter code: Delta-1-pyrroline-5-carboxylate dehydrogenase, mitochondrial (575 aa).

NAD(+) is bound at residue 297 to 302 (GKIQSG). Catalysis depends on glutamate 317, which acts as the Proton acceptor. The active-site Nucleophile is the cysteine 351.

Belongs to the aldehyde dehydrogenase family.

The protein resides in the mitochondrion inner membrane. It catalyses the reaction L-glutamate 5-semialdehyde + NAD(+) + H2O = L-glutamate + NADH + 2 H(+). The protein operates within amino-acid degradation; L-proline degradation into L-glutamate; L-glutamate from L-proline: step 2/2. This Saccharomyces cerevisiae (strain ATCC 204508 / S288c) (Baker's yeast) protein is Delta-1-pyrroline-5-carboxylate dehydrogenase, mitochondrial (PUT2).